The sequence spans 229 residues: Germin-like protein 12-1 (229 aa).

An N-terminal signal peptide occupies residues 1-22 (MASSNFFLPTALIALVATQAMA). Cys32 and Cys47 are oxidised to a cystine. The Cupin type-1 domain occupies 62–217 (ANLDKPMDTT…AFQVDKKAVD (156 aa)). N-linked (GlcNAc...) asparagine glycosylation is present at Asn78. Residues His111, His113, Glu118, and His162 each coordinate Mn(2+).

Belongs to the germin family. As to quaternary structure, oligomer (believed to be a pentamer but probably hexamer).

It localises to the secreted. It is found in the extracellular space. Its subcellular location is the apoplast. Its function is as follows. May play a role in plant defense. Probably has no oxalate oxidase activity even if the active site is conserved. This is Germin-like protein 12-1 from Oryza sativa subsp. japonica (Rice).